The primary structure comprises 102 residues: Small ribosomal subunit protein uS10 (102 aa).

The protein belongs to the universal ribosomal protein uS10 family. In terms of assembly, part of the 30S ribosomal subunit.

Its function is as follows. Involved in the binding of tRNA to the ribosomes. This chain is Small ribosomal subunit protein uS10, found in Geotalea daltonii (strain DSM 22248 / JCM 15807 / FRC-32) (Geobacter daltonii).